The following is a 652-amino-acid chain: uncharacterized protein (652 aa).

Composition is skewed to basic and acidic residues over residues 1–13 (MSVT…TERK) and 641–652 (ATERTDNLADAA). 2 disordered regions span residues 1-21 (MSVT…PAKT) and 628-652 (VPGW…ADAA).

This sequence belongs to the ParB family.

This is an uncharacterized protein from Escherichia coli O157:H7.